The following is a 181-amino-acid chain: uncharacterized protein (181 aa).

An N-acetyltransferase domain is found at 1–159; sequence MTVHHFTFHI…KACWMMQSLT (159 aa).

It belongs to the acetyltransferase family.

This is an uncharacterized protein from Escherichia coli (strain K12).